The primary structure comprises 856 residues: Inactive rhomboid protein 1 (856 aa).

Residues 1–21 form a disordered region; sequence MGEARRDSSSSLQHKKPPWLK. Residues 1–412 lie on the Cytoplasmic side of the membrane; sequence MGEARRDSSS…HRPFFTYWLT (412 aa). Serine 76 and serine 176 each carry phosphoserine. 2 positions are modified to phosphothreonine: threonine 180 and threonine 183. At serine 391 the chain carries Phosphoserine. Residues 413–433 form a helical membrane-spanning segment; that stretch reads FVHSLVTILAVCIYGVAPVGF. The Lumenal segment spans residues 434-656; that stretch reads SQHETVDSVL…NPEVPDQFYR (223 aa). N-linked (GlcNAc...) asparagine glycosylation is present at asparagine 584. A helical membrane pass occupies residues 657–677; the sequence is LWLSLFLHAGVLHCLVSVCFQ. Residues 678 to 692 lie on the Cytoplasmic side of the membrane; it reads MTVLRDLEKLAGWHR. The chain crosses the membrane as a helical span at residues 693 to 713; that stretch reads IAIIYLLSGVTGNLASAIFLP. Residues 714–715 lie on the Lumenal side of the membrane; it reads YR. Residues 716–736 form a helical membrane-spanning segment; sequence AEVGPAGSQFGILACLFVELF. Residues 737-747 lie on the Cytoplasmic side of the membrane; the sequence is QSWQILARPWR. Residues 748 to 768 traverse the membrane as a helical segment; that stretch reads AFFKLLAVVLFLFTFGLLPWI. Residues 769–773 lie on the Lumenal side of the membrane; the sequence is DNFAH. A helical transmembrane segment spans residues 774 to 794; that stretch reads ISGFISGLFLSFAFLPYISFG. The Cytoplasmic portion of the chain corresponds to 795–804; the sequence is KFDLYRKRCQ. The chain crosses the membrane as a helical span at residues 805–825; the sequence is IIVFQLVFLGLLAGLVVLFYF. Over 826 to 856 the chain is Lumenal; the sequence is YPVRCEWCEFLTCIPFTDKFCEKYELDAQLH.

This sequence belongs to the peptidase S54 family. As to quaternary structure, homodimer, or homooligomer. Interacts with TGFA and HBEGF. Interacts with EGF; may retain EGF in the endoplasmic reticulum and regulates its degradation through the endoplasmic reticulum-associated degradation (ERAD). Interacts (via cytoplasmic N-terminus) with FRMD8/iTAP; this interaction leads to mutual protein stabilization. Interacts with ADAM17/TACE.

It localises to the endoplasmic reticulum membrane. The protein localises to the golgi apparatus membrane. Functionally, regulates ADAM17 protease, a sheddase of the epidermal growth factor (EGF) receptor ligands and TNF, thereby plays a role in sleep, cell survival, proliferation, migration and inflammation. Does not exhibit any protease activity on its own. This Bos taurus (Bovine) protein is Inactive rhomboid protein 1 (RHBDF1).